The sequence spans 257 residues: Hydroxyacylglutathione hydrolase (257 aa).

Positions 58, 60, 62, 63, 116, 135, and 173 each coordinate Zn(2+).

The protein belongs to the metallo-beta-lactamase superfamily. Glyoxalase II family. Monomer. The cofactor is Zn(2+).

It carries out the reaction an S-(2-hydroxyacyl)glutathione + H2O = a 2-hydroxy carboxylate + glutathione + H(+). The protein operates within secondary metabolite metabolism; methylglyoxal degradation; (R)-lactate from methylglyoxal: step 2/2. Its function is as follows. Thiolesterase that catalyzes the hydrolysis of S-D-lactoyl-glutathione to form glutathione and D-lactic acid. The protein is Hydroxyacylglutathione hydrolase of Brucella melitensis biotype 1 (strain ATCC 23456 / CCUG 17765 / NCTC 10094 / 16M).